Here is a 386-residue protein sequence, read N- to C-terminus: uncharacterized protein (386 aa).

The next 12 membrane-spanning stretches (helical) occupy residues 8 to 28, 43 to 63, 79 to 99, 102 to 122, 134 to 154, 156 to 176, 216 to 236, 241 to 261, 272 to 292, 297 to 317, 342 to 362, and 365 to 385; these read VFVI…IAPI, IGLI…PVGV, FFYG…GFLI, IFTG…IAAI, IFNS…GILA, MYGI…AAII, FIIN…LALY, NITI…MALL, LGNI…YLLS, FLTI…SSTA, INIG…ILGI, and MYKF…LRIE.

It belongs to the major facilitator superfamily.

It is found in the cell membrane. This is an uncharacterized protein from Methanocaldococcus jannaschii (strain ATCC 43067 / DSM 2661 / JAL-1 / JCM 10045 / NBRC 100440) (Methanococcus jannaschii).